The chain runs to 503 residues: DnaJ homolog subfamily C member 3 (503 aa).

The N-terminal stretch at 1 to 31 is a signal peptide; the sequence is MVSAAASAGRLGSALPFLLVLLDLQYQGAEC. TPR repeat units lie at residues 37 to 70, 71 to 104, 105 to 137, 153 to 186, 187 to 220, 221 to 254, 267 to 300, 305 to 338, and 339 to 372; these read VEKQLEMGKKLLAAGQLADALSHFHAAIEGDSDN, YIAYYRRATVYLAMGKSKAAIRDLSKVVELKQDF, TSRLQRGHLLLKQGKFDEAEDDFKNVLKSNPSN, LQRLYSQALSAYRQEDYEAAIPLLDEILAVCVWD, AELRELRAECYIKEGEPSKAISDLKAAAKLKSDN, TEAFYKISRIYYQLGDHELSLSEVRECLKLDQDH, LNKQIESAEEFIREGRYEDAISKYDSVMKTEPDV, TRAKERICHCLSKNQQATEAITVCTQVLQLEPTN, and VNALKDRAEAYLLEDLYEEAIKDYETAQANSEND. A disulfide bond links Cys247 and Cys257. Cys312 and Cys328 form a disulfide bridge. The segment at 374–392 is flexible linker; that stretch reads QIREGLERAQRMLKQSQKR. The J domain maps to 393–461; that stretch reads DYYKILGVKR…EMRRKFDAGE (69 aa).

It is found in the endoplasmic reticulum. In terms of biological role, may be involved in the unfolded protein response (UPR) during ER stress. This Gallus gallus (Chicken) protein is DnaJ homolog subfamily C member 3 (DNAJC3).